The following is a 529-amino-acid chain: Peptide chain release factor 3 (529 aa).

A tr-type G domain is found at 11-280; it reads AKRRTFAIIS…GLVEWAPAPM (270 aa). Residues 20 to 27, 88 to 92, and 142 to 145 each bind GTP; these read SHPDAGKT, DTPGH, and NKLD.

It belongs to the TRAFAC class translation factor GTPase superfamily. Classic translation factor GTPase family. PrfC subfamily.

It is found in the cytoplasm. Its function is as follows. Increases the formation of ribosomal termination complexes and stimulates activities of RF-1 and RF-2. It binds guanine nucleotides and has strong preference for UGA stop codons. It may interact directly with the ribosome. The stimulation of RF-1 and RF-2 is significantly reduced by GTP and GDP, but not by GMP. The chain is Peptide chain release factor 3 from Salmonella arizonae (strain ATCC BAA-731 / CDC346-86 / RSK2980).